We begin with the raw amino-acid sequence, 416 residues long: Thyroid hormone receptor alpha-A (416 aa).

Over residues methionine 1–serine 13 the composition is skewed to polar residues. The tract at residues methionine 1 to serine 37 is disordered. The modulating stretch occupies residues methionine 1 to proline 58. Positions glycine 15–proline 24 are enriched in basic and acidic residues. 2 NR C4-type zinc fingers span residues cysteine 59–cysteine 79 and cysteine 97–cysteine 121. Positions cysteine 59–methionine 126 form a DNA-binding region, nuclear receptor. Positions alanine 169–aspartate 413 constitute an NR LBD domain.

This sequence belongs to the nuclear hormone receptor family. NR1 subfamily.

Its subcellular location is the nucleus. Functionally, high affinity receptor for triiodothyronine. The chain is Thyroid hormone receptor alpha-A (thra1) from Paralichthys olivaceus (Bastard halibut).